The primary structure comprises 360 residues: Dihydroorotate dehydrogenase (quinone) (360 aa).

FMN-binding positions include 66–70 and Thr-90; that span reads AGFDK. Residue Lys-70 participates in substrate binding. 115-119 serves as a coordination point for substrate; sequence NRMGF. Asn-143 and Asn-176 together coordinate FMN. Asn-176 serves as a coordination point for substrate. Ser-179 (nucleophile) is an active-site residue. Residue Asn-181 coordinates substrate. Lys-212 and Thr-240 together coordinate FMN. 241 to 242 is a substrate binding site; it reads NT. FMN contacts are provided by residues Gly-264, Gly-293, and 314 to 315; that span reads YT.

This sequence belongs to the dihydroorotate dehydrogenase family. Type 2 subfamily. In terms of assembly, monomer. Requires FMN as cofactor.

It is found in the cell membrane. The enzyme catalyses (S)-dihydroorotate + a quinone = orotate + a quinol. It functions in the pathway pyrimidine metabolism; UMP biosynthesis via de novo pathway; orotate from (S)-dihydroorotate (quinone route): step 1/1. In terms of biological role, catalyzes the conversion of dihydroorotate to orotate with quinone as electron acceptor. The chain is Dihydroorotate dehydrogenase (quinone) from Mycobacterium marinum (strain ATCC BAA-535 / M).